A 118-amino-acid polypeptide reads, in one-letter code: Ribonuclease P protein component (118 aa).

It belongs to the RnpA family. Consists of a catalytic RNA component (M1 or rnpB) and a protein subunit.

It catalyses the reaction Endonucleolytic cleavage of RNA, removing 5'-extranucleotides from tRNA precursor.. In terms of biological role, RNaseP catalyzes the removal of the 5'-leader sequence from pre-tRNA to produce the mature 5'-terminus. It can also cleave other RNA substrates such as 4.5S RNA. The protein component plays an auxiliary but essential role in vivo by binding to the 5'-leader sequence and broadening the substrate specificity of the ribozyme. This Vibrio cholerae serotype O1 (strain ATCC 39541 / Classical Ogawa 395 / O395) protein is Ribonuclease P protein component.